Consider the following 239-residue polypeptide: Biosynthetic peptidoglycan transglycosylase (239 aa).

A helical transmembrane segment spans residues 29-49; the sequence is GMFGLGALMLVWIVAYAVVPV.

This sequence belongs to the glycosyltransferase 51 family.

Its subcellular location is the cell inner membrane. The catalysed reaction is [GlcNAc-(1-&gt;4)-Mur2Ac(oyl-L-Ala-gamma-D-Glu-L-Lys-D-Ala-D-Ala)](n)-di-trans,octa-cis-undecaprenyl diphosphate + beta-D-GlcNAc-(1-&gt;4)-Mur2Ac(oyl-L-Ala-gamma-D-Glu-L-Lys-D-Ala-D-Ala)-di-trans,octa-cis-undecaprenyl diphosphate = [GlcNAc-(1-&gt;4)-Mur2Ac(oyl-L-Ala-gamma-D-Glu-L-Lys-D-Ala-D-Ala)](n+1)-di-trans,octa-cis-undecaprenyl diphosphate + di-trans,octa-cis-undecaprenyl diphosphate + H(+). Its pathway is cell wall biogenesis; peptidoglycan biosynthesis. In terms of biological role, peptidoglycan polymerase that catalyzes glycan chain elongation from lipid-linked precursors. In Jannaschia sp. (strain CCS1), this protein is Biosynthetic peptidoglycan transglycosylase.